We begin with the raw amino-acid sequence, 1064 residues long: Bifunctional cytochrome P450/NADPH--P450 reductase ascE (1064 aa).

Residues 1–484 (MTELIPGPKG…LHGGAKKGSK (484 aa)) form a cytochrome P450 region. Cys-411 is a binding site for heme. The tract at residues 485 to 1064 (IDGPSSGASL…ANRYVTEIFA (580 aa)) is NADPH-P-450 reductase. The 141-residue stretch at 504–644 (MTILYGSDSG…DFERWQDDQL (141 aa)) folds into the Flavodoxin-like domain. FMN-binding positions include 510-514 (SDSGT) and 588-620 (VYGC…KRIA). In terms of domain architecture, FAD-binding FR-type spans 676–905 (VDADEATVQS…KPALRLFHPP (230 aa)).

The protein in the N-terminal section; belongs to the cytochrome P450 family. FAD serves as cofactor. The cofactor is FMN. Heme is required as a cofactor.

The enzyme catalyses ilicicolin A + NADPH + O2 + H(+) = ilicicolin A epoxide + NADP(+) + H2O. It participates in secondary metabolite biosynthesis; terpenoid biosynthesis. Functionally, bifunctional cytochrome P450/NADPH--P450 reductase; part of the asc-1 gene cluster that mediates the biosynthesis both ascochlorin and ascofuranone, a strong inhibitor of cyanide-insensitive alternative oxidases and a promising drug candidate against African trypanosomiasis. The first step in the pathway is performed by the non-reducing polyketide synthase ascC that produces orsellinic acid by condensing acetyl-CoA with 3 malonyl-CoA units. Orsellinic acid is then prenylated by the prenyltransferase ascA to yield ilicicolinic acid B. Ilicicolinic acid B is further reduced to ilicicolin B by the reductase ascB. The halogenase ascD then chlorinates ilicicolin B to produce ilicicolin A which is converted to ilicicolin A epoxide by the cytochrome P450 monooxygenase ascE that catalyzes stereoselective epoxidation of the terminal double bond of the prenyl group. Ilicicolin A epoxide is the last common precursor for the biosynthesis of ascofuranone and ascochlorin. The terpene cyclase ascF produces a monocyclic terpene, and the cyclization reaction is proposed to be initiated by protonation of the terminal epoxide of ilicicolin A epoxide to generate a monocyclic tertiarycation, which is followed by a series of hydride and methyl shifts with abstraction of proton, leading to the formation of the (14S,15R,19R)-trimethylcyclohexanone ring structure of ilicicolin C, which is finally reduced to ascochlorin by the dehydrogenase ascG. On the other hand, ilicicolin A epoxide is hydroxylated by the cytochrome P450 monooxygenase ascH, and the resultant product is cyclized by the terpene cyclase ascI to ascofuranol via protonation-initiated epoxide ring opening, which facilitates the 6-endo-tet cyclization to form the tetrahy-drofuran ring. Finally, ascofuranol is oxidized into ascofuranone by ascJ. The sequence is that of Bifunctional cytochrome P450/NADPH--P450 reductase ascE from Acremonium egyptiacum (Oospora egyptiaca).